A 167-amino-acid chain; its full sequence is NAD(P)H-quinone oxidoreductase subunit I, chloroplastic (167 aa).

2 consecutive 4Fe-4S ferredoxin-type domains span residues 55–84 and 95–124; these read GRIH…VDWK and LNYS…MTEE. Cys-64, Cys-67, Cys-70, Cys-74, Cys-104, Cys-107, Cys-110, and Cys-114 together coordinate [4Fe-4S] cluster.

The protein belongs to the complex I 23 kDa subunit family. In terms of assembly, NDH is composed of at least 16 different subunits, 5 of which are encoded in the nucleus. The cofactor is [4Fe-4S] cluster.

The protein resides in the plastid. It localises to the chloroplast thylakoid membrane. The catalysed reaction is a plastoquinone + NADH + (n+1) H(+)(in) = a plastoquinol + NAD(+) + n H(+)(out). It catalyses the reaction a plastoquinone + NADPH + (n+1) H(+)(in) = a plastoquinol + NADP(+) + n H(+)(out). Functionally, NDH shuttles electrons from NAD(P)H:plastoquinone, via FMN and iron-sulfur (Fe-S) centers, to quinones in the photosynthetic chain and possibly in a chloroplast respiratory chain. The immediate electron acceptor for the enzyme in this species is believed to be plastoquinone. Couples the redox reaction to proton translocation, and thus conserves the redox energy in a proton gradient. This is NAD(P)H-quinone oxidoreductase subunit I, chloroplastic from Aethionema cordifolium (Lebanon stonecress).